A 133-amino-acid polypeptide reads, in one-letter code: Small ribosomal subunit protein uS8 (133 aa).

This sequence belongs to the universal ribosomal protein uS8 family. In terms of assembly, part of the 30S ribosomal subunit. Contacts proteins S5 and S12.

One of the primary rRNA binding proteins, it binds directly to 16S rRNA central domain where it helps coordinate assembly of the platform of the 30S subunit. This is Small ribosomal subunit protein uS8 from Deinococcus deserti (strain DSM 17065 / CIP 109153 / LMG 22923 / VCD115).